The following is a 70-amino-acid chain: Protein tam14 (70 aa).

Positions 1-19 are enriched in polar residues; that stretch reads MPTVQTPSQRRANTQFQKN. Positions 1–20 are disordered; sequence MPTVQTPSQRRANTQFQKNI. Residues 45-65 form a helical membrane-spanning segment; sequence IAMFFILLMSGGIILGILRFL.

It belongs to the RAMP4 family.

It is found in the membrane. Its subcellular location is the endoplasmic reticulum membrane. Functionally, interacts with target proteins during their translocation into the lumen of the endoplasmic reticulum. Protects unfolded target proteins against degradation during ER stress. May facilitate glycosylation of target proteins after termination of ER stress. This Schizosaccharomyces pombe (strain 972 / ATCC 24843) (Fission yeast) protein is Protein tam14 (tam14).